An 864-amino-acid chain; its full sequence is MSKSAVSPMMQQYLGIKAQHTDKLVFYRMGDFYELFLDDAVEAAKLLDITLTTRGQMDGVPIKMAGVPFHAAEQYLARLVKLGKSVAICEQVGEVGAGKGPVERKVVRIVTPGTLTDSALLEDKETNRIVAVSPDKKYIGLAWASLQSGEFKTKLTTADKLNDELARLQAAEILLPDSKNAPQLQTASGVTRLNAWQFAADAGEKLLTEYFGCQDLRGFGLDSKEHAVSIGAAGALLNYIRLTQNLMPQHLDGLSLETDSQYIGMDAATRRNLEITQTLSGKKTPTLFSILDGCATHMGSRLLALWLHHPLRNRAHIRARQEAVTALESQYEPLQCHLKSIADIERIAARIAVGNARPRDLASLRDSLFELAQIDLSATGSSLLETLKAVFPETLPVAETLKAAVMPEPSVWLKDGNVINHGFHPELDELRRIQNHGDEFLLDLEAKERERTGLSTLKVEFNRVHGFYIELSKTQAEQAPADYQRRQTLKNAERFITPELKAFEDKVLTAQDQALALEKQLFDGVLKNLRTALPQLQKAAKAAAALDVLSTFSALAKERNFVRPEFADYPVVHIENGRHPVVEQQVRHFTANHTDLDHKHRLMLLTGPNMGGKSTYMRQVALIVLLAHTGCFVPADAATIGPVDQIFTRIGASDDLASNRSTFMVEMSETAYILHHATEQIIVLMDEVGRGTSTFDGLALAHAIAEHLLQKNKSFSLFATHYFELTYLPEAHAAAVNMHLSALEQGRDIVFLHQIQPGPAGKSYGIAVAKLAGLPVRALKAAQKHLNGLENQAAANRPQLDIFSTMPSEKGDEPNVDCFVDKAEEKHFEGILAAALENLDPDSLTPREALSELYRLKDLCKSVS.

Residue Gly607–Ser614 participates in ATP binding.

Belongs to the DNA mismatch repair MutS family.

Functionally, this protein is involved in the repair of mismatches in DNA. It is possible that it carries out the mismatch recognition step. This protein has a weak ATPase activity. The protein is DNA mismatch repair protein MutS of Neisseria gonorrhoeae (strain NCCP11945).